A 553-amino-acid polypeptide reads, in one-letter code: Retrotransposon Gag-like protein 3 (553 aa).

The stretch at 2 to 43 (VEDLAASYVTLKLENEILQAQVKRLMEENAALQAQIPELQKS) forms a coiled coil. 2 disordered regions span residues 38 to 274 (PELQ…PLDP) and 474 to 514 (SGGV…EAER). The segment covering 45–57 (AVKEHEPLRKPSE) has biased composition (basic and acidic residues). The span at 58–73 (AQEPPESPEFPAARES) shows a compositional bias: low complexity. Residues 87–113 (EPTKIREPREPSAISELREPPEIKEPQ) are compositionally biased toward basic and acidic residues. Over residues 118-127 (TNESGESSAI) the composition is skewed to polar residues. Residues 132 to 147 (GSPEIKEPHLPPKSKE) show a composition bias toward basic and acidic residues. A compositionally biased stretch (polar residues) spans 239 to 250 (QTVPEYQETSSQ). A compositionally biased stretch (low complexity) spans 474-483 (SGGVDSSSSS). The segment covering 495-507 (TENQPVQATSNRP) has biased composition (polar residues). The segment at 523–537 (CLYCGHPGHFARDCP) adopts a CCHC-type zinc-finger fold.

As to expression, expressed in embryonic myogenic progenitor cells, not expressed in adult and aged satellite cells.

Its subcellular location is the nucleus. Its function is as follows. May function as a transcriptional regulator. Plays a role in postnatal myogenesis, may be involved in the regulation of satellite cells self-renewal. This Mus musculus (Mouse) protein is Retrotransposon Gag-like protein 3.